The primary structure comprises 359 residues: DNA polymerase IV (359 aa).

Positions 4–184 (IVHVDMDAFY…LPVNRIPGVG (181 aa)) constitute a UmuC domain. Aspartate 8 and aspartate 102 together coordinate Mg(2+). Glutamate 103 is a catalytic residue.

This sequence belongs to the DNA polymerase type-Y family. As to quaternary structure, monomer. Requires Mg(2+) as cofactor.

The protein localises to the cytoplasm. The enzyme catalyses DNA(n) + a 2'-deoxyribonucleoside 5'-triphosphate = DNA(n+1) + diphosphate. Poorly processive, error-prone DNA polymerase involved in untargeted mutagenesis. Copies undamaged DNA at stalled replication forks, which arise in vivo from mismatched or misaligned primer ends. These misaligned primers can be extended by PolIV. Exhibits no 3'-5' exonuclease (proofreading) activity. May be involved in translesional synthesis, in conjunction with the beta clamp from PolIII. The sequence is that of DNA polymerase IV from Xanthomonas campestris pv. campestris (strain 8004).